The sequence spans 143 residues: Histone H2A.z (143 aa).

This sequence belongs to the histone H2A family. As to quaternary structure, the nucleosome is a histone octamer containing two molecules each of H2A, H2B, H3 and H4 assembled in one H3-H4 heterotetramer and two H2A-H2B heterodimers. The octamer wraps approximately 147 bp of DNA.

The protein localises to the nucleus. It localises to the chromosome. Its function is as follows. Core component of nucleosome which plays a central role in DNA double strand break (DSB) repair. Nucleosomes wrap and compact DNA into chromatin, limiting DNA accessibility to the cellular machineries which require DNA as a template. Histones thereby play a central role in transcription regulation, DNA repair, DNA replication and chromosomal stability. DNA accessibility is regulated via a complex set of post-translational modifications of histones, also called histone code, and nucleosome remodeling. The protein is Histone H2A.z (H2AZ) of Dictyostelium discoideum (Social amoeba).